We begin with the raw amino-acid sequence, 57 residues long: Large ribosomal subunit protein bL32 (57 aa).

A compositionally biased stretch (basic residues) spans Met-1 to Gln-19. Residues Met-1–Ala-22 are disordered.

The protein belongs to the bacterial ribosomal protein bL32 family.

The sequence is that of Large ribosomal subunit protein bL32 from Rhodococcus jostii (strain RHA1).